The sequence spans 254 residues: RNA polymerase sigma factor SigI8 (254 aa).

The Polymerase core binding signature appears at 61–74 (DEYSIALIAFNEAI). The H-T-H motif DNA-binding region spans 209-228 (YKELTERFNLCRRTLEKNRK).

The protein belongs to the sigma-70 factor family. SigI subfamily. In terms of assembly, interacts with RsgI8.

Its subcellular location is the cytoplasm. Negatively regulated by the anti-sigma-I factor RsgI8. Sigma factors are initiation factors that promote the attachment of RNA polymerase to specific initiation sites and are then released. The protein is RNA polymerase sigma factor SigI8 of Acetivibrio thermocellus (strain ATCC 27405 / DSM 1237 / JCM 9322 / NBRC 103400 / NCIMB 10682 / NRRL B-4536 / VPI 7372) (Clostridium thermocellum).